We begin with the raw amino-acid sequence, 189 residues long: dCTP deaminase (189 aa).

Residues 112 to 117 (KSTYAR), 136 to 138 (TLE), glutamine 157, tyrosine 171, and glutamine 181 each bind dCTP. The Proton donor/acceptor role is filled by glutamate 138.

The protein belongs to the dCTP deaminase family. Homotrimer.

It catalyses the reaction dCTP + H2O + H(+) = dUTP + NH4(+). Its pathway is pyrimidine metabolism; dUMP biosynthesis; dUMP from dCTP (dUTP route): step 1/2. Catalyzes the deamination of dCTP to dUTP. This is dCTP deaminase from Alcanivorax borkumensis (strain ATCC 700651 / DSM 11573 / NCIMB 13689 / SK2).